We begin with the raw amino-acid sequence, 201 residues long: Peptide deformylase (201 aa).

Fe cation is bound by residues C114 and H156. Residue E157 is part of the active site. A Fe cation-binding site is contributed by H160.

It belongs to the polypeptide deformylase family. Fe(2+) is required as a cofactor.

The enzyme catalyses N-terminal N-formyl-L-methionyl-[peptide] + H2O = N-terminal L-methionyl-[peptide] + formate. Functionally, removes the formyl group from the N-terminal Met of newly synthesized proteins. Requires at least a dipeptide for an efficient rate of reaction. N-terminal L-methionine is a prerequisite for activity but the enzyme has broad specificity at other positions. This Tropheryma whipplei (strain TW08/27) (Whipple's bacillus) protein is Peptide deformylase.